Here is a 179-residue protein sequence, read N- to C-terminus: Large ribosomal subunit protein uL10 (179 aa).

Belongs to the universal ribosomal protein uL10 family. In terms of assembly, part of the ribosomal stalk of the 50S ribosomal subunit. The N-terminus interacts with L11 and the large rRNA to form the base of the stalk. The C-terminus forms an elongated spine to which L12 dimers bind in a sequential fashion forming a multimeric L10(L12)X complex.

Its function is as follows. Forms part of the ribosomal stalk, playing a central role in the interaction of the ribosome with GTP-bound translation factors. This is Large ribosomal subunit protein uL10 from Thermotoga petrophila (strain ATCC BAA-488 / DSM 13995 / JCM 10881 / RKU-1).